Here is a 1434-residue protein sequence, read N- to C-terminus: Inositol hexakisphosphate and diphosphoinositol-pentakisphosphate kinase 1 (1434 aa).

K66–K67 provides a ligand contact to substrate. ATP contacts are provided by residues R147, K200, H207, R226, E250–M253, and D259–K261. Residue R226–K227 coordinates substrate. 2 residues coordinate substrate: K261 and R275. Residues S277, D322, and D334–N336 each bind ATP. S339–K342 contributes to the substrate binding site. The tract at residues P384–A455 is polyphosphoinositide-binding domain. Residues E916–G1017 are disordered. Phosphoserine is present on residues S941 and S984. Over residues F1002 to G1017 the composition is skewed to polar residues. S1034, S1070, S1142, and S1149 each carry phosphoserine. Disordered stretches follow at residues N1133–D1193, E1228–V1251, and T1396–S1434. Residues S1165–V1183 are compositionally biased toward low complexity. The segment covering L1403–S1434 has biased composition (acidic residues).

The protein belongs to the histidine acid phosphatase family. VIP1 subfamily.

The protein resides in the cytoplasm. It is found in the cytosol. The protein localises to the cell membrane. The enzyme catalyses 1D-myo-inositol hexakisphosphate + ATP = 1-diphospho-1D-myo-inositol 2,3,4,5,6-pentakisphosphate + ADP. It carries out the reaction 5-diphospho-1D-myo-inositol 1,2,3,4,6-pentakisphosphate + ATP + H(+) = 1,5-bis(diphospho)-1D-myo-inositol 2,3,4,6-tetrakisphosphate + ADP. Bifunctional inositol kinase that acts in concert with the IP6K kinases IP6K1, IP6K2 and IP6K3 to synthesize the diphosphate group-containing inositol pyrophosphates diphosphoinositol pentakisphosphate, PP-InsP5, and bis-diphosphoinositol tetrakisphosphate, (PP)2-InsP4. PP-InsP5 and (PP)2-InsP4, also respectively called InsP7 and InsP8, regulate a variety of cellular processes, including apoptosis, vesicle trafficking, cytoskeletal dynamics, exocytosis, insulin signaling and neutrophil activation. Phosphorylates inositol hexakisphosphate (InsP6) at position 1 to produce PP-InsP5 which is in turn phosphorylated by IP6Ks to produce (PP)2-InsP4. Alternatively, phosphorylates PP-InsP5 at position 1, produced by IP6Ks from InsP6, to produce (PP)2-InsP4. Activated when cells are exposed to hyperosmotic stress. This chain is Inositol hexakisphosphate and diphosphoinositol-pentakisphosphate kinase 1, found in Rattus norvegicus (Rat).